The sequence spans 145 residues: Large ribosomal subunit protein uL11 (145 aa).

It belongs to the universal ribosomal protein uL11 family. Part of the ribosomal stalk of the 50S ribosomal subunit. Interacts with L10 and the large rRNA to form the base of the stalk. L10 forms an elongated spine to which L12 dimers bind in a sequential fashion forming a multimeric L10(L12)X complex. Post-translationally, one or more lysine residues are methylated.

In terms of biological role, forms part of the ribosomal stalk which helps the ribosome interact with GTP-bound translation factors. In Rickettsia prowazekii (strain Madrid E), this protein is Large ribosomal subunit protein uL11.